The following is a 417-amino-acid chain: 4-hydroxy-3-methylbut-2-en-1-yl diphosphate synthase (flavodoxin) (417 aa).

Cys-304, Cys-307, Cys-350, and Glu-357 together coordinate [4Fe-4S] cluster.

The protein belongs to the IspG family. [4Fe-4S] cluster serves as cofactor.

It carries out the reaction (2E)-4-hydroxy-3-methylbut-2-enyl diphosphate + oxidized [flavodoxin] + H2O + 2 H(+) = 2-C-methyl-D-erythritol 2,4-cyclic diphosphate + reduced [flavodoxin]. The protein operates within isoprenoid biosynthesis; isopentenyl diphosphate biosynthesis via DXP pathway; isopentenyl diphosphate from 1-deoxy-D-xylulose 5-phosphate: step 5/6. Functionally, converts 2C-methyl-D-erythritol 2,4-cyclodiphosphate (ME-2,4cPP) into 1-hydroxy-2-methyl-2-(E)-butenyl 4-diphosphate. This chain is 4-hydroxy-3-methylbut-2-en-1-yl diphosphate synthase (flavodoxin), found in Rhizobium meliloti (strain 1021) (Ensifer meliloti).